Consider the following 95-residue polypeptide: Aspartyl/glutamyl-tRNA(Asn/Gln) amidotransferase subunit C (95 aa).

The protein belongs to the GatC family. Heterotrimer of A, B and C subunits.

The enzyme catalyses L-glutamyl-tRNA(Gln) + L-glutamine + ATP + H2O = L-glutaminyl-tRNA(Gln) + L-glutamate + ADP + phosphate + H(+). It catalyses the reaction L-aspartyl-tRNA(Asn) + L-glutamine + ATP + H2O = L-asparaginyl-tRNA(Asn) + L-glutamate + ADP + phosphate + 2 H(+). Its function is as follows. Allows the formation of correctly charged Asn-tRNA(Asn) or Gln-tRNA(Gln) through the transamidation of misacylated Asp-tRNA(Asn) or Glu-tRNA(Gln) in organisms which lack either or both of asparaginyl-tRNA or glutaminyl-tRNA synthetases. The reaction takes place in the presence of glutamine and ATP through an activated phospho-Asp-tRNA(Asn) or phospho-Glu-tRNA(Gln). The polypeptide is Aspartyl/glutamyl-tRNA(Asn/Gln) amidotransferase subunit C (Alcanivorax borkumensis (strain ATCC 700651 / DSM 11573 / NCIMB 13689 / SK2)).